A 192-amino-acid chain; its full sequence is Protein GrpE (192 aa).

Residues 1–41 (MSKEEFPHEKDLKDEVTPDKAPKKDPKAAPKEEVKENPVEN) form a disordered region.

This sequence belongs to the GrpE family. In terms of assembly, homodimer.

It is found in the cytoplasm. In terms of biological role, participates actively in the response to hyperosmotic and heat shock by preventing the aggregation of stress-denatured proteins, in association with DnaK and GrpE. It is the nucleotide exchange factor for DnaK and may function as a thermosensor. Unfolded proteins bind initially to DnaJ; upon interaction with the DnaJ-bound protein, DnaK hydrolyzes its bound ATP, resulting in the formation of a stable complex. GrpE releases ADP from DnaK; ATP binding to DnaK triggers the release of the substrate protein, thus completing the reaction cycle. Several rounds of ATP-dependent interactions between DnaJ, DnaK and GrpE are required for fully efficient folding. This Lactobacillus johnsonii (strain CNCM I-12250 / La1 / NCC 533) protein is Protein GrpE.